The chain runs to 560 residues: S100P-binding protein (560 aa).

Disordered stretches follow at residues 259-292 and 313-400; these read SDIP…ESTP and SSSS…GKSF. The span at 313–352 shows a compositional bias: polar residues; the sequence is SSSSLQLPETSLASSTEPSPSLQLSASSVTAMNGQNNSNK. Basic and acidic residues predominate over residues 378 to 387; it reads QKVEPKKNKP.

Its subcellular location is the nucleus. The protein is S100P-binding protein (s100pbp) of Xenopus laevis (African clawed frog).